The primary structure comprises 663 residues: Heparan-alpha-glucosaminide N-acetyltransferase (663 aa).

The disordered stretch occupies residues 1–24 (MTGARASAAEQRRAGRSGQARAAE). Topologically, residues 1-190 (MTGARASAAE…LAVNEDPVDS (190 aa)) are lumenal, vesicle. Residues Asn94, Asn142, and Asn162 are each glycosylated (N-linked (GlcNAc...) asparagine). Cysteines 151 and 462 form a disulfide. A helical membrane pass occupies residues 191 to 211 (NLPVSIAFLIGLAVIIVISFL). At 212-275 (RLLLSLDDFN…PRLRSVDTFR (64 aa)) the chain is on the cytoplasmic side. Phosphoserine is present on residues Ser243 and Ser245. Residues 276 to 296 (GIALILMVFVNYGGGKYWYFK) form a helical membrane-spanning segment. The active site involves His297. The Lumenal, vesicle segment spans residues 297 to 302 (HASWNG). A helical membrane pass occupies residues 303 to 323 (LTVADLVFPWFVFIMGSSIFL). Topologically, residues 324–345 (SMTSILQRGCSKFRLLGKIAWR) are cytoplasmic. The chain crosses the membrane as a helical span at residues 346-366 (SFLLICIGIIIVNPNYCLGPL). Residues 367–374 (SWDKVRIP) lie on the Lumenal, vesicle side of the membrane. Residues 375 to 395 (GVLQRLGVTYFVVAVLELLFA) form a helical membrane-spanning segment. The Cytoplasmic segment spans residues 396-420 (KPVPEHCASERSCLSLRDITSSWPQ). The chain crosses the membrane as a helical span at residues 421–441 (WLLILVLEGLWLGLTFLLPVP). Over 442–500 (GCPTGYLGPGGIGDFGKYPNCTGGAAGYIDRLLLGDDHLYQHPSSAVLYHTEVAYDPEG) the chain is Lumenal, vesicle. Residues 501-521 (ILGTINSIVMAFLGVQAGKIL) form a helical membrane-spanning segment. Topologically, residues 522–529 (LYYKARTK) are cytoplasmic. Residues 530–550 (DILIRFTAWCCILGLISVALT) traverse the membrane as a helical segment. The Lumenal, vesicle portion of the chain corresponds to 551 to 564 (KVSENEGFIPVNKN). The chain crosses the membrane as a helical span at residues 565–585 (LWSLSYVTTLSSFAFFILLVL). Over 586–592 (YPVVDVK) the chain is Cytoplasmic. A helical transmembrane segment spans residues 593 to 613 (GLWTGTPFFYPGMNSILVYVG). At 614 to 634 (HEVFENYFPFQWKLKDNQSHK) the chain is on the lumenal, vesicle side. Residues 624–635 (QWKLKDNQSHKE) are lysosomal targeting region. Residues 635 to 655 (EHLTQNIVATALWVLIAYILY) form a helical membrane-spanning segment. The Cytoplasmic portion of the chain corresponds to 656–663 (RKKIFWKI).

As to quaternary structure, homooligomer. Homooligomerization is necessary for enzyme activity. Undergoes intralysosomal proteolytic cleavage; occurs within the end of the first and/or the beginning of the second luminal domain and is essential for the activation of the enzyme. Post-translationally, glycosylated. In terms of tissue distribution, widely expressed, with highest level in leukocytes, heart, liver, skeletal muscle, lung, placenta and liver.

It localises to the lysosome membrane. It carries out the reaction alpha-D-glucosaminyl-[heparan sulfate](n) + acetyl-CoA = N-acetyl-alpha-D-glucosaminyl-[heparan sulfate](n) + CoA + H(+). Lysosomal acetyltransferase that acetylates the non-reducing terminal alpha-glucosamine residue of intralysosomal heparin or heparan sulfate, converting it into a substrate for luminal alpha-N-acetyl glucosaminidase. The sequence is that of Heparan-alpha-glucosaminide N-acetyltransferase (HGSNAT) from Homo sapiens (Human).